We begin with the raw amino-acid sequence, 265 residues long: Signal peptidase I (265 aa).

Over 1–19 (MQIDTKTNTNKTTAQEWKS) the chain is Cytoplasmic. The chain crosses the membrane as a helical span at residues 20–40 (FAFVVCIALLIRILIMEPFTV). Residues 41–265 (PTGSMKATIL…IFRNLYNTDE (225 aa)) lie on the Periplasmic side of the membrane. Catalysis depends on residues serine 44 and lysine 107.

The protein belongs to the peptidase S26 family.

It is found in the cell inner membrane. The enzyme catalyses Cleavage of hydrophobic, N-terminal signal or leader sequences from secreted and periplasmic proteins.. The polypeptide is Signal peptidase I (lepB) (Rickettsia canadensis (strain McKiel)).